Consider the following 558-residue polypeptide: Glucose-6-phosphate isomerase (558 aa).

The residue at position 12 (Lys12) is an N6-acetyllysine. Phosphoserine occurs at positions 86 and 107. At Lys142 the chain carries N6-acetyllysine. Residue 159–160 (GS) coordinates D-glucose 6-phosphate. Phosphoserine; by CK2 is present on Ser185. 210–215 (SKTFTT) is a D-glucose 6-phosphate binding site. At Thr250 the chain carries Phosphothreonine. Gln354, Glu358, and His389 together coordinate D-glucose 6-phosphate. Glu358 acts as the Proton donor in catalysis. The active site involves His389. Lys454 carries the N6-acetyllysine; alternate modification. Lys454 carries the N6-malonyllysine; alternate modification. Lys454 carries the post-translational modification N6-succinyllysine; alternate. Position 455 is a phosphoserine (Ser455). Lys519 contributes to the D-glucose 6-phosphate binding site. Residue Lys519 is part of the active site.

Belongs to the GPI family. Homodimer; in the catalytically active form. Monomer in the secreted form. Phosphorylation at Ser-185 by CK2 has been shown to decrease enzymatic activity and may contribute to secretion by a non-classical secretory pathway. In terms of processing, ISGylated.

The protein resides in the cytoplasm. It is found in the secreted. It carries out the reaction alpha-D-glucose 6-phosphate = beta-D-fructose 6-phosphate. The protein operates within carbohydrate degradation; glycolysis; D-glyceraldehyde 3-phosphate and glycerone phosphate from D-glucose: step 2/4. Functionally, in the cytoplasm, catalyzes the conversion of glucose-6-phosphate to fructose-6-phosphate, the second step in glycolysis, and the reverse reaction during gluconeogenesis. Besides it's role as a glycolytic enzyme, also acts as a secreted cytokine: acts as an angiogenic factor (AMF) that stimulates endothelial cell motility. Acts as a neurotrophic factor, neuroleukin, for spinal and sensory neurons. It is secreted by lectin-stimulated T-cells and induces immunoglobulin secretion. The protein is Glucose-6-phosphate isomerase of Cricetulus griseus (Chinese hamster).